Reading from the N-terminus, the 485-residue chain is Aspartyl/glutamyl-tRNA(Asn/Gln) amidotransferase subunit B (485 aa).

It belongs to the GatB/GatE family. GatB subfamily. As to quaternary structure, heterotrimer of A, B and C subunits.

The enzyme catalyses L-glutamyl-tRNA(Gln) + L-glutamine + ATP + H2O = L-glutaminyl-tRNA(Gln) + L-glutamate + ADP + phosphate + H(+). The catalysed reaction is L-aspartyl-tRNA(Asn) + L-glutamine + ATP + H2O = L-asparaginyl-tRNA(Asn) + L-glutamate + ADP + phosphate + 2 H(+). Its function is as follows. Allows the formation of correctly charged Asn-tRNA(Asn) or Gln-tRNA(Gln) through the transamidation of misacylated Asp-tRNA(Asn) or Glu-tRNA(Gln) in organisms which lack either or both of asparaginyl-tRNA or glutaminyl-tRNA synthetases. The reaction takes place in the presence of glutamine and ATP through an activated phospho-Asp-tRNA(Asn) or phospho-Glu-tRNA(Gln). This is Aspartyl/glutamyl-tRNA(Asn/Gln) amidotransferase subunit B from Borrelia recurrentis (strain A1).